We begin with the raw amino-acid sequence, 1694 residues long: Immunoglobulin A1 protease autotransporter (1694 aa).

Residues 1–25 form the signal peptide; sequence MLNKKFKLNFIALTVAYALTPYTEA. Residues 26-332 enclose the Peptidase S6 domain; sequence ALVRDDVDYQ…NIYKPEFAKT (307 aa). Ser288 is an active-site residue. The disordered stretch occupies residues 991–1403; sequence VEKRNQTVDT…GSDRSTVALR (413 aa). A compositionally biased stretch (polar residues) spans 997 to 1021; the sequence is TVDTTNITTPNNIQADVPSVPSNNE. Low complexity predominate over residues 1037-1047; it reads TPSETTETVAE. The segment covering 1049 to 1061 has biased composition (basic and acidic residues); sequence SKQESKTVEKNEQ. Polar residues predominate over residues 1082–1095; it reads KANTQTNEVAQSGS. Composition is skewed to basic and acidic residues over residues 1104–1124 and 1142–1154; these read EIKE…KDEI and APKE…KVEE. 2 stretches are compositionally biased toward polar residues: residues 1155 to 1178 and 1199 to 1210; these read TQVQ…SPNS and VSKNQTENTTDQ. Basic and acidic residues predominate over residues 1211 to 1226; the sequence is PTEREKTAKVETEKTQ. Polar residues-rich tracts occupy residues 1227 to 1247, 1255 to 1297, and 1308 to 1336; these read EPPQ…TVQP, NVPT…TAIT, and TETA…NSES. Residues 1352 to 1370 show a composition bias toward low complexity; that stretch reads ETSAEETTAASTDETTIAD. Over residues 1374–1384 the composition is skewed to basic residues; that stretch reads RSKPNRRSRRS. In terms of domain architecture, Autotransporter spans 1442–1694; that stretch reads NNEGQYNVWV…TAELKLSFSF (253 aa).

Its subcellular location is the periplasm. It is found in the secreted. The protein localises to the cell surface. The protein resides in the cell outer membrane. The enzyme catalyses Cleavage of immunoglobulin A molecules at certain Pro-|-Xaa bonds in the hinge region. No small molecule substrates are known.. In terms of biological role, virulence factor; cleaves host immunoglobulin A producing intact Fc and Fab fragments. In Haemophilus influenzae (strain ATCC 51907 / DSM 11121 / KW20 / Rd), this protein is Immunoglobulin A1 protease autotransporter (iga).